We begin with the raw amino-acid sequence, 169 residues long: MSNPMRNPKVEKVVVHMGVGESGQHLVDAEGILETITGQTVVRSYAKRTLPAFTIKKGEPIGCKVTLRGEAAEGFLETSLGIVEKRLNESQFDIFGNVSFGVEEHTDYPGMRYDPNIGIFGMDITVVVNRPGYRVSKRRIAKRKIPTSHKITKEDTISFFKDKYAVEVE.

The protein belongs to the universal ribosomal protein uL5 family. In terms of assembly, part of the 50S ribosomal subunit; contacts the 5S rRNA and probably tRNA. Forms a bridge to the 30S subunit in the 70S ribosome.

Its function is as follows. This is one of the proteins that bind and probably mediate the attachment of the 5S RNA into the large ribosomal subunit, where it forms part of the central protuberance. In the 70S ribosome it contacts protein S13 of the 30S subunit (bridge B1b), connecting the 2 subunits; this bridge is implicated in subunit movement. May contact the P site tRNA; the 5S rRNA and some of its associated proteins might help stabilize positioning of ribosome-bound tRNAs. This Methanococcoides burtonii (strain DSM 6242 / NBRC 107633 / OCM 468 / ACE-M) protein is Large ribosomal subunit protein uL5.